The primary structure comprises 149 residues: Histone H2B.3, sperm (149 aa).

Residues 1–57 (MPRSPAKTSPRKGSPRKGSPRKGSPSRKASPKRGGKGAKRAGKGGRRRRVVKRRRRR) are disordered. 6 short sequence motifs (SPKK motif) span residues 4 to 7 (SPAK), 9 to 12 (SPRK), 14 to 17 (SPRK), 19 to 22 (SPRK), 24 to 27 (SPSR), and 30 to 33 (SPKR). The span at 9–20 (SPRKGSPRKGSP) shows a compositional bias: basic residues. Phosphoserine is present on residues Ser-19, Ser-24, and Ser-30. Residues 29–57 (ASPKRGGKGAKRAGKGGRRRRVVKRRRRR) show a composition bias toward basic residues. O-linked (GlcNAc) serine glycosylation occurs at Ser-136. A Glycyl lysine isopeptide (Lys-Gly) (interchain with G-Cter in ubiquitin) cross-link involves residue Lys-144.

This sequence belongs to the histone H2B family. The nucleosome is a histone octamer containing two molecules each of H2A, H2B, H3 and H4 assembled in one H3-H4 heterotetramer and two H2A-H2B heterodimers. The octamer wraps approximately 147 bp of DNA. Post-translationally, monoubiquitination of Lys-144 gives a specific tag for epigenetic transcriptional activation and is also prerequisite for histone H3 'Lys-4' and 'Lys-79' methylation. Phosphorylated on SPKK motifs 4, 5 and 6; which may regulate DNA binding. Dephosphorylated during maturation of spermatids to mature sperm and rephosphorylated at fertilization. In terms of processing, glcNAcylation at Ser-136 promotes monoubiquitination of Lys-144. It fluctuates in response to extracellular glucose, and associates with transcribed genes.

The protein resides in the nucleus. It is found in the chromosome. In terms of biological role, core component of nucleosome. Nucleosomes wrap and compact DNA into chromatin, limiting DNA accessibility to the cellular machineries which require DNA as a template. Histones thereby play a central role in transcription regulation, DNA repair, DNA replication and chromosomal stability. DNA accessibility is regulated via a complex set of post-translational modifications of histones, also called histone code, and nucleosome remodeling. The polypeptide is Histone H2B.3, sperm (Parechinus angulosus (Angulate sea urchin)).